We begin with the raw amino-acid sequence, 602 residues long: UvrABC system protein C (602 aa).

Residues 15–92 form the GIY-YIG domain; it reads DLPGSYQMKD…IQKYQPYYNI (78 aa). Residues 197-232 form the UVR domain; sequence GKAKASLTAKMERAAKNLQFERAAEIRDQLHYIEQT.

Belongs to the UvrC family. Interacts with UvrB in an incision complex.

Its subcellular location is the cytoplasm. In terms of biological role, the UvrABC repair system catalyzes the recognition and processing of DNA lesions. UvrC both incises the 5' and 3' sides of the lesion. The N-terminal half is responsible for the 3' incision and the C-terminal half is responsible for the 5' incision. This chain is UvrABC system protein C, found in Lacticaseibacillus casei (strain BL23) (Lactobacillus casei).